Consider the following 567-residue polypeptide: Geranylgeranyl transferase type-2 subunit alpha (567 aa).

PFTA repeat units follow at residues 44–78 (LDESVLELTSQILGANPDFATLWNCRREVLQRLEV), 88–122 (LVKAELGFLESCLRVNPKSYGTWHHRCWLLGRLPE), 124–158 (NWARELELCARFLEVDERNFHCWDYRRFVASQAAV), 159–193 (PPAEELAFTDSLITRNFSNYSSWHYRSCLLPQLHP), 207–241 (VLLKELELVQNAFFTDPNDQSAWFYHRWLLGRADP), and 363–397 (VLQSELESCKELQELEPENKWCLLTIILLMRALDP). At Ser-98 the chain carries Phosphoserine. LRR repeat units follow at residues 442 to 463 (DVRVLHLGHKDLTVLCHLEQLL), 464 to 486 (LVTHLDLSHNRLRALPPALAALR), 487 to 508 (CLEVLQANDNAIESLDGVTNLP), 509 to 530 (RLQELSLCNNRLQQPAVLQPLA), and 534 to 555 (RLVLLNLQDNPLCQAVGISEHL).

This sequence belongs to the protein prenyltransferase subunit alpha family. In terms of assembly, heterotrimer composed of RABGGTA, RABGGTB and CHM; within this trimer, RABGGTA and RABGGTB form the catalytic component B, while CHM (component A) mediates peptide substrate binding. The Rab GGTase dimer (RGGT) interacts with CHM (component A) prior to Rab protein binding; the association is stabilized by geranylgeranyl pyrophosphate (GGpp). The CHM:RGGT:Rab complex is destabilized by GGpp. Interacts with non-phosphorylated form of RAB8A; phosphorylation of RAB8A disrupts this interaction.

The enzyme catalyses geranylgeranyl diphosphate + L-cysteinyl-[protein] = S-geranylgeranyl-L-cysteinyl-[protein] + diphosphate. With respect to regulation, the enzymatic reaction requires the aid of a Rab escort protein (also called component A), such as CHM. In terms of biological role, catalyzes the transfer of a geranylgeranyl moiety from geranylgeranyl diphosphate to both cysteines of Rab proteins with the C-terminal sequence -XXCC, -XCXC and -CCXX, such as RAB1A, RAB3A, RAB5A and RAB7A. This Sus scrofa (Pig) protein is Geranylgeranyl transferase type-2 subunit alpha (RABGGTA).